Here is an 818-residue protein sequence, read N- to C-terminus: MKFTLSWLKQFLETSASVTEIAEALTAIGLEVEEVIDKAAELQKFEVAYITNIKPHPSADKLKLCDVETKSGMLQIVCGARNARAGIKVVLANIGIEIPNGKFKIKESVIRGEKSCGMLCSEEELLLASESEGIIELSEDAVVGENFTKYYGLDDPIFVINVTPNRGDALGVYGIARDLAAKGIGILKELEISVIKSTFISKMKLNVQDKEACPLFTFREIRNLKNKPSPDWLRKLLKNVGVKTISSLVDVTNYISYSFGQPMHAYDADRIKGGITVARHCEKHSDEAISGQQNEIATAALQPRNDVAKCHALNGKEYLLTENDLVIKDESGIQGLAGVIGEADSSCTDSTTNIILEAACFNAKMVAASGRRFQIDTDARYRNERNIDRNFTEKALDIATNLILSICGNGEVSEVVKVGEKESQKKPLDFSACYLEKITGIKLNIKAIEAILNKLGFITDVKGEIIKVIAPSWRHDITILEDIAEEIARIYGYDKIESIKLPELDQDNNKLREHKRISSFKRILASKGYDEVVTNSFMSSEDAKLFAELKEELFLLNPISIGDNYMRPTILPNLLSIVSKNLARSIKDMAFFEVGPSFIDLNTEATYLTAIISGSYNNKNPHSFGRGYDVFDLKGDLELVADYAGLSIDKCIATNGTALPQYYHPTRAVNIGLGKNLLGHFGQIHPKILKYYDINQEIFAFELNITNLPLIKAKFGKRDEFAVSDFQANFRDYAFIVGQDHRVGEIISYINNFNKKLIKSVILFDIYSGDKLPEGKKSIAVKIELQADDRTLSDTDLNSFSKDLVAAISQKFQGTLRE.

The region spanning 39-148 (AAELQKFEVA…EDAVVGENFT (110 aa)) is the tRNA-binding domain. Residues 423–498 (SQKKPLDFSA…RIYGYDKIES (76 aa)) form the B5 domain. D476, D482, E485, and E486 together coordinate Mg(2+). The region spanning 724–817 (SDFQANFRDY…ISQKFQGTLR (94 aa)) is the FDX-ACB domain.

It belongs to the phenylalanyl-tRNA synthetase beta subunit family. Type 1 subfamily. Tetramer of two alpha and two beta subunits. Mg(2+) serves as cofactor.

It localises to the cytoplasm. It carries out the reaction tRNA(Phe) + L-phenylalanine + ATP = L-phenylalanyl-tRNA(Phe) + AMP + diphosphate + H(+). This chain is Phenylalanine--tRNA ligase beta subunit, found in Rickettsia conorii (strain ATCC VR-613 / Malish 7).